A 523-amino-acid polypeptide reads, in one-letter code: MAAALQVLRHLARAPSGPLLWGGPLARMASSMALAEQARQLFESTVGAVLPGPLLQRALSLDPDSGELKVRDRSFQLRQNLYLVGFGKAVLGMAAAAEELLGQHLVQGVISVPKGIRAAMEHAGKQEMLLKPHSRIQVFEGAEDNLPDRDALRAALAIRQLAEGLTADDLLLVLISGGGSALLPAPIPPVTLEEKQTLTKLLAARGATIQELNTIRKALSQLKGGGLAQAAYPAQVVSLILSDVVGDPVEVIASGPTVASIHSVQDCLYILNRYGLRTALPRSVKTVLARADSDPHGPHTCGHVLNVILGSNALALAEAQKQAEALGYRAVVLSTAIQGDVKSVAQFYGLLARVAGAHLALPGAGASVQEDERLYELAADLQLPDLQLKEALEAVVGAPGPVCLLAGGEPTVRLQGSGKGGRNQELALRVGVELGQWPLGTVDVLFLSGGTDGQDGPTEAAGAWVRPELTSQAAAEGLDVATFLAHNDSHTFFCRFQGGAHLLHTGLTGTNVTDAHFLFLHPQ.

Serine 60 carries the phosphoserine modification. The residue at position 200 (lysine 200) is an N6-acetyllysine.

It belongs to the glycerate kinase type-2 family.

It is found in the cytoplasm. The enzyme catalyses (R)-glycerate + ATP = (2R)-3-phosphoglycerate + ADP + H(+). The protein is Glycerate kinase (GLYCTK) of Bos taurus (Bovine).